The following is a 771-amino-acid chain: Ribonucleoside-diphosphate reductase large subunit (771 aa).

Residues 1–92 form the ATP-cone domain; that stretch reads MFVIKRNGYK…VSNLHKETKK (92 aa). Residues 5 to 6, 11 to 17, T53, D57, and K88 contribute to the ATP site; these read KR and ENVMFDK. Residues S202 and S217 each contribute to the GDP site. DTTP-binding positions include 226-228, K243, and R256; that span reads DSI. N427 provides a ligand contact to GDP. The active-site Proton acceptor is the N427. The active-site Cysteine radical intermediate is the C429. Residues E431 and 603-606 each bind GDP; that span reads TAST. The Proton acceptor role is filled by E431.

This sequence belongs to the ribonucleoside diphosphate reductase large chain family. Interacts with RNR2/OPG047 subunit. Requires Mg(2+) as cofactor.

The catalysed reaction is a 2'-deoxyribonucleoside 5'-diphosphate + [thioredoxin]-disulfide + H2O = a ribonucleoside 5'-diphosphate + [thioredoxin]-dithiol. Its function is as follows. Ribonucleoside-diphosphate reductase holoenzyme provides the precursors necessary for viral DNA synthesis. Allows virus growth in non-dividing cells. Catalyzes the biosynthesis of deoxyribonucleotides from the corresponding ribonucleotides. The chain is Ribonucleoside-diphosphate reductase large subunit (OPG080) from Homo sapiens (Human).